The primary structure comprises 55 residues: Large ribosomal subunit protein bL33 (55 aa).

This sequence belongs to the bacterial ribosomal protein bL33 family.

The polypeptide is Large ribosomal subunit protein bL33 (Rhizorhabdus wittichii (strain DSM 6014 / CCUG 31198 / JCM 15750 / NBRC 105917 / EY 4224 / RW1) (Sphingomonas wittichii)).